The sequence spans 1101 residues: Rho guanine nucleotide exchange factor gef2 (1101 aa).

Residues 203 to 222 (EDSRKKTSSPSPSFASSKDA) are disordered. Residues 210 to 219 (SSPSPSFASS) are compositionally biased toward low complexity. The DH domain occupies 230–428 (KKKSLLIEMM…KNIAEMPTVD (199 aa)). A phosphoserine mark is found at Ser-736 and Ser-977.

The protein resides in the cytoplasm. Its subcellular location is the cytoskeleton. The protein localises to the microtubule organizing center. It is found in the spindle pole body. In terms of biological role, has a role in the control of cell polarity and cytokinesis. Involved in bipolar growth and septum formation. This Schizosaccharomyces pombe (strain 972 / ATCC 24843) (Fission yeast) protein is Rho guanine nucleotide exchange factor gef2 (gef2).